A 738-amino-acid chain; its full sequence is Nucleoprotein (738 aa).

Residues 334–363 (VNVGEQYQQLREAATEAEKQLQQYAETREL) adopt a coiled-coil conformation. The tract at residues 418–640 (GDRYPDDNDI…QGSESEALPI (223 aa)) is disordered. Over residues 461–476 (PYDDESNNYPDYEDSA) the composition is skewed to acidic residues. Over residues 544-564 (PGSNTNQPQGNMSSTLQSMTP) the composition is skewed to polar residues. Positions 567-594 (EESEPDDQKDDDDESLTSLDSEGDEDVE) are enriched in acidic residues. Positions 616–625 (VDTNQQNGPS) are enriched in polar residues.

Belongs to the filoviruses nucleoprotein family. Homooligomer. Homomultimerizes to form the nucleocapsid. Binds to viral genomic RNA. Interacts with VP35 and VP30 to form the nucleocapsid. Interacts with host PPP2R5C; this interaction leads to VP30 dephosphorylation and viral transcription. Interacts with VP24; this interaction facilitates nucleocapsid assembly and genome packaging. Interacts with matrix protein VP40; this interaction allows recruitment of the nucleocapsid into progeny virions. Interacts with host STAU1. Interacts with host NXF1 (via RNA-binding domain); this interaction recruits NXF1 to the inclusion bodies were viral replication takes place, probably to export viral mRNA-NXF1 complexes from these sites. Interacts with host CCDC92; this interaction sequesters NP in the host cytoplasm. Interacts with host TRIM14. In terms of processing, phosphorylated and O-glycosylated by host. Acetylated by host EP300 in vitro.

The protein localises to the virion. It is found in the host cytoplasm. Its function is as follows. Oligomerizes into helical capsid to encapsidate the viral genome, protecting it from nucleases and the cellular innate immune response. VP35 binds to and stabilizes monomeric NP, keeping it soluble. Upon virus replication, NP is recruited to bind cooperatively viral genomic RNA and VP35 is released. The encapsidated genomic RNA is termed the nucleocapsid and serves as template for transcription and replication. The nucleocapsid is helical with a pitch of 10.81 NP per turn and a diameter of about 22nm. Each NP binds to six nucleotides of viral genomic RNA, three being exposed to the solvant and three hidden into the nucleocapsid. Also recruits host PPP2R5C phosphatase to dephosphorylate VP30 and thereby promote viral transcription. Upon virion assembly and budding, NP binds to VP24 and possibly host STAU1. This chain is Nucleoprotein (NP), found in Sudan ebolavirus (strain Human/Uganda/Gulu/2000) (SEBOV).